Here is a 972-residue protein sequence, read N- to C-terminus: FHF complex subunit HOOK-interacting protein 1B (972 aa).

2 disordered regions span residues 465 to 548 (APSP…GELE) and 573 to 644 (SAPY…SWPE). Serine 467 is modified (phosphoserine). Residues 478-501 (RGPGSPSVDSSSVTTVPRPSTPSR) show a composition bias toward low complexity. A phosphoserine mark is found at serine 510, serine 523, serine 529, and serine 533. Over residues 523 to 535 (SPGLSASPASSPG) the composition is skewed to low complexity. Phosphoserine occurs at positions 859 and 897.

Belongs to the FHIP family. In terms of assembly, component of the FTS/Hook/FHIP complex (FHF complex), composed of AKTIP/FTS, FHIP1B, and one or more members of the Hook family of proteins HOOK1, HOOK2, and HOOK3. The FHF complex associates with the homotypic vesicular sorting complex (the HOPS complex).

In terms of biological role, component of the FTS/Hook/FHIP complex (FHF complex). The FHF complex may function to promote vesicle trafficking and/or fusion via the homotypic vesicular protein sorting complex (the HOPS complex). FHF complex promotes the distribution of AP-4 complex to the perinuclear area of the cell. This is FHF complex subunit HOOK-interacting protein 1B from Homo sapiens (Human).